Consider the following 334-residue polypeptide: Tryptophan--tRNA ligase (334 aa).

Residues 11-13 (QPS) and 19-20 (GN) contribute to the ATP site. The short motif at 12 to 20 (PSGELTIGN) is the 'HIGH' region element. L-tryptophan is bound at residue Asp135. ATP-binding positions include 147 to 149 (GED), Val186, and 195 to 199 (KMSKS). The 'KMSKS' region signature appears at 195-199 (KMSKS).

It belongs to the class-I aminoacyl-tRNA synthetase family. As to quaternary structure, homodimer.

The protein resides in the cytoplasm. The catalysed reaction is tRNA(Trp) + L-tryptophan + ATP = L-tryptophyl-tRNA(Trp) + AMP + diphosphate + H(+). Functionally, catalyzes the attachment of tryptophan to tRNA(Trp). In Klebsiella aerogenes (Enterobacter aerogenes), this protein is Tryptophan--tRNA ligase.